The chain runs to 694 residues: Methionine--tRNA ligase (694 aa).

Positions 14–24 match the 'HIGH' region motif; that stretch reads PYANGPIHLGH. Residues cysteine 145, cysteine 148, cysteine 158, and cysteine 161 each coordinate Zn(2+). The short motif at 330–334 is the 'KMSKS' region element; it reads KMSKS. An ATP-binding site is contributed by lysine 333. The disordered stretch occupies residues 558 to 579; the sequence is SLQATAGQPEPHSQVRHAEHQQ. The region spanning 593 to 694 is the tRNA-binding domain; sequence DFAKVDLRIA…EGAQPGMKVK (102 aa).

The protein belongs to the class-I aminoacyl-tRNA synthetase family. MetG type 1 subfamily. As to quaternary structure, homodimer. The cofactor is Zn(2+).

Its subcellular location is the cytoplasm. It carries out the reaction tRNA(Met) + L-methionine + ATP = L-methionyl-tRNA(Met) + AMP + diphosphate. Functionally, is required not only for elongation of protein synthesis but also for the initiation of all mRNA translation through initiator tRNA(fMet) aminoacylation. The protein is Methionine--tRNA ligase of Methylococcus capsulatus (strain ATCC 33009 / NCIMB 11132 / Bath).